A 56-amino-acid polypeptide reads, in one-letter code: Small ribosomal subunit protein uS14 (56 aa).

C21, C24, C39, and C42 together coordinate Zn(2+).

It belongs to the universal ribosomal protein uS14 family. In terms of assembly, component of the 40S small ribosomal subunit. Zn(2+) serves as cofactor.

It localises to the cytoplasm. The protein localises to the cytosol. The protein resides in the rough endoplasmic reticulum. The polypeptide is Small ribosomal subunit protein uS14 (RpS29) (Culex quinquefasciatus (Southern house mosquito)).